Reading from the N-terminus, the 65-residue chain is Large ribosomal subunit protein bL35 (65 aa).

Disordered regions lie at residues 1–23 and 29–48; these read MPKI…GKVK and GSHI…RQSH. The span at 33-43 shows a compositional bias: basic residues; sequence LAKKSRKRKRD.

The protein belongs to the bacterial ribosomal protein bL35 family.

The polypeptide is Large ribosomal subunit protein bL35 (Desulfatibacillum aliphaticivorans).